The primary structure comprises 508 residues: Cyclic AMP-responsive element-binding protein 5 (508 aa).

Residues phenylalanine 16–histidine 40 form a C2H2-type zinc finger. Lysine 50 is covalently cross-linked (Glycyl lysine isopeptide (Lys-Gly) (interchain with G-Cter in SUMO2)). Phosphothreonine is present on residues threonine 59 and threonine 61. A Phosphoserine modification is found at serine 137. Residues arginine 265 to arginine 391 form a disordered region. 2 stretches are compositionally biased toward basic residues: residues histidine 271–glutamine 280 and proline 289–histidine 326. The segment covering threonine 337–alanine 346 has biased composition (polar residues). The segment covering threonine 347–glutamine 357 has biased composition (low complexity). Residues valine 369–arginine 386 show a composition bias toward basic and acidic residues. The bZIP domain occupies aspartate 375–histidine 438. The tract at residues arginine 377 to lysine 397 is basic motif. Positions leucine 403–leucine 431 are leucine-zipper. The disordered stretch occupies residues glutamate 449–cysteine 468.

It belongs to the bZIP family. As to quaternary structure, binds DNA as a homodimer or as a heterodimer with JUN or ATF2/CREBP1.

The protein localises to the nucleus. Functionally, binds to the cAMP response element and activates transcription. This chain is Cyclic AMP-responsive element-binding protein 5 (CREB5), found in Homo sapiens (Human).